Consider the following 200-residue polypeptide: Recombination protein RecR (200 aa).

The C4-type zinc finger occupies 57 to 72; it reads CRQCRTLTEQELCPQC. In terms of domain architecture, Toprim spans 80-175; sequence TQLCVVEGPT…AATRIAHGVP (96 aa).

It belongs to the RecR family.

Its function is as follows. May play a role in DNA repair. It seems to be involved in an RecBC-independent recombinational process of DNA repair. It may act with RecF and RecO. This is Recombination protein RecR from Pseudomonas putida (strain GB-1).